We begin with the raw amino-acid sequence, 161 residues long: Lincosamide resistance protein (161 aa).

This chain is Lincosamide resistance protein (linA), found in Staphylococcus haemolyticus.